The sequence spans 343 residues: Arginine-hydroxylase NDUFAF5, mitochondrial (343 aa).

Residues 1-29 (MLRKVVLLRLCPLLGRPAVSASSGSRREV) constitute a mitochondrion transit peptide.

This sequence belongs to the methyltransferase superfamily. As to quaternary structure, interacts with NDUFAF8, leading to stabilize NDUFAF5. Interacts with NDUFS7. Interacts with PYURF (via TRM112 domain); the interaction is direct and stabilizes NDUFAF5 protein.

The protein localises to the mitochondrion inner membrane. Functionally, arginine hydroxylase that mediates hydroxylation of 'Arg-122' of NDUFS7 and is involved in the assembly of mitochondrial NADH:ubiquinone oxidoreductase complex (complex I, MT-ND1) at early stages. May also have methyltransferase activity. The protein is Arginine-hydroxylase NDUFAF5, mitochondrial of Mus musculus (Mouse).